Consider the following 458-residue polypeptide: ATP synthase subunit beta (458 aa).

148 to 155 lines the ATP pocket; sequence GGAGVGKT.

This sequence belongs to the ATPase alpha/beta chains family. As to quaternary structure, F-type ATPases have 2 components, CF(1) - the catalytic core - and CF(0) - the membrane proton channel. CF(1) has five subunits: alpha(3), beta(3), gamma(1), delta(1), epsilon(1). CF(0) has three main subunits: a(1), b(2) and c(9-12). The alpha and beta chains form an alternating ring which encloses part of the gamma chain. CF(1) is attached to CF(0) by a central stalk formed by the gamma and epsilon chains, while a peripheral stalk is formed by the delta and b chains.

The protein localises to the cell inner membrane. It catalyses the reaction ATP + H2O + 4 H(+)(in) = ADP + phosphate + 5 H(+)(out). Produces ATP from ADP in the presence of a proton gradient across the membrane. The catalytic sites are hosted primarily by the beta subunits. This chain is ATP synthase subunit beta, found in Pseudomonas putida (strain GB-1).